A 458-amino-acid polypeptide reads, in one-letter code: Alpha-2C adrenergic receptor (458 aa).

At 1–51 (MASPALAAALAAAAAEGPNGSDAGEWGSGGGANASGTDWGPPPGQYSAGAV) the chain is on the extracellular side. 2 N-linked (GlcNAc...) asparagine glycosylation sites follow: Asn19 and Asn33. The chain crosses the membrane as a helical span at residues 52–76 (AGLAAVVGFLIVFTVVGNVLVVIAV). Residues 77–88 (LTSRALRAPQNL) lie on the Cytoplasmic side of the membrane. Residues 89–114 (FLVSLASADILVATLVMPFSLANELM) form a helical membrane-spanning segment. Residues 115–124 (AYWYFGQVWC) are Extracellular-facing. Cys124 and Cys202 are disulfide-bonded. The chain crosses the membrane as a helical span at residues 125–147 (GVYLALDVLFCTSSIVHLCAISL). The Cytoplasmic portion of the chain corresponds to 148–168 (DRYWSVTQAVEYNLKRTPRRV). Residues 169–191 (KATIVAVWLISAVISFPPLVSFY) traverse the membrane as a helical segment. At 192 to 207 (RRPDGAAYPQCGLNDE) the chain is on the extracellular side. A helical membrane pass occupies residues 208-231 (TWYILSSCIGSFFAPCLIMGLVYA). Residues 232 to 379 (RIYRVAKLRT…QAREKRFTFV (148 aa)) are Cytoplasmic-facing. Positions 245 to 343 (SEKRGPAGPD…SPGPGGRLSR (99 aa)) are disordered. The segment covering 291 to 303 (RRRRRGALRRGGR) has biased composition (basic residues). A helical membrane pass occupies residues 380–403 (LAVVMGVFVLCWFPFFFSYSLYGI). Topologically, residues 404 to 416 (CREACQLPEPLFK) are extracellular. Residues 417 to 437 (FFFWIGYCNSSLNPVIYTVFN) traverse the membrane as a helical segment. Over 438–458 (QDFRRSFKHILFRRRRRGFRQ) the chain is Cytoplasmic.

It belongs to the G-protein coupled receptor 1 family. Adrenergic receptor subfamily. ADRA2C sub-subfamily.

Its subcellular location is the cell membrane. In terms of biological role, alpha-2 adrenergic receptors mediate the catecholamine-induced inhibition of adenylate cyclase through the action of G proteins. This Rattus norvegicus (Rat) protein is Alpha-2C adrenergic receptor (Adra2c).